Reading from the N-terminus, the 362-residue chain is 3-dehydroquinate synthase (362 aa).

Residues aspartate 71 to lysine 76, glycine 105 to aspartate 109, threonine 129 to threonine 130, lysine 142, and lysine 151 contribute to the NAD(+) site. The Zn(2+) site is built by glutamate 184, histidine 248, and histidine 265.

This sequence belongs to the sugar phosphate cyclases superfamily. Dehydroquinate synthase family. Co(2+) serves as cofactor. Zn(2+) is required as a cofactor. Requires NAD(+) as cofactor.

Its subcellular location is the cytoplasm. The catalysed reaction is 7-phospho-2-dehydro-3-deoxy-D-arabino-heptonate = 3-dehydroquinate + phosphate. Its pathway is metabolic intermediate biosynthesis; chorismate biosynthesis; chorismate from D-erythrose 4-phosphate and phosphoenolpyruvate: step 2/7. Its function is as follows. Catalyzes the conversion of 3-deoxy-D-arabino-heptulosonate 7-phosphate (DAHP) to dehydroquinate (DHQ). The sequence is that of 3-dehydroquinate synthase from Hamiltonella defensa subsp. Acyrthosiphon pisum (strain 5AT).